The sequence spans 100 residues: Large ribosomal subunit protein uL23 (100 aa).

Belongs to the universal ribosomal protein uL23 family. Part of the 50S ribosomal subunit. Contacts protein L29, and trigger factor when it is bound to the ribosome.

One of the early assembly proteins it binds 23S rRNA. One of the proteins that surrounds the polypeptide exit tunnel on the outside of the ribosome. Forms the main docking site for trigger factor binding to the ribosome. This Mycolicibacterium vanbaalenii (strain DSM 7251 / JCM 13017 / BCRC 16820 / KCTC 9966 / NRRL B-24157 / PYR-1) (Mycobacterium vanbaalenii) protein is Large ribosomal subunit protein uL23.